Consider the following 123-residue polypeptide: Large ribosomal subunit protein bL12 (123 aa).

This sequence belongs to the bacterial ribosomal protein bL12 family. As to quaternary structure, homodimer. Part of the ribosomal stalk of the 50S ribosomal subunit. Forms a multimeric L10(L12)X complex, where L10 forms an elongated spine to which 2 to 4 L12 dimers bind in a sequential fashion. Binds GTP-bound translation factors.

Functionally, forms part of the ribosomal stalk which helps the ribosome interact with GTP-bound translation factors. Is thus essential for accurate translation. This Bartonella tribocorum (strain CIP 105476 / IBS 506) protein is Large ribosomal subunit protein bL12.